Consider the following 160-residue polypeptide: Large ribosomal subunit protein uL10 (160 aa).

Belongs to the universal ribosomal protein uL10 family. In terms of assembly, part of the ribosomal stalk of the 50S ribosomal subunit. The N-terminus interacts with L11 and the large rRNA to form the base of the stalk. The C-terminus forms an elongated spine to which L12 dimers bind in a sequential fashion forming a multimeric L10(L12)X complex.

In terms of biological role, forms part of the ribosomal stalk, playing a central role in the interaction of the ribosome with GTP-bound translation factors. This chain is Large ribosomal subunit protein uL10, found in Ehrlichia canis (strain Jake).